Here is a 586-residue protein sequence, read N- to C-terminus: Arginine--tRNA ligase (586 aa).

Residues 133-143 carry the 'HIGH' region motif; the sequence is ANPTGPLNIVS.

It belongs to the class-I aminoacyl-tRNA synthetase family. Monomer.

Its subcellular location is the cytoplasm. The enzyme catalyses tRNA(Arg) + L-arginine + ATP = L-arginyl-tRNA(Arg) + AMP + diphosphate. This chain is Arginine--tRNA ligase, found in Leptospira interrogans serogroup Icterohaemorrhagiae serovar copenhageni (strain Fiocruz L1-130).